The sequence spans 380 residues: Probable cytosolic iron-sulfur protein assembly protein 1 (380 aa).

WD repeat units follow at residues 10–49 (AHND…KFPL), 56–108 (THKR…VEYD), 135–175 (GHEN…EEFE), 182–221 (DHSQ…DEWS), 228–275 (GHEG…EEDK), 299–338 (VHKY…KWVI), and 346–380 (HGVH…LWNV).

Belongs to the WD repeat CIA1 family. As to quaternary structure, interacts with NAR1.

The protein resides in the cytoplasm. It localises to the nucleus. Its function is as follows. Essential component of the cytosolic iron-sulfur (Fe/S) protein assembly machinery. Required for the maturation of extramitochondrial Fe/S proteins. The polypeptide is Probable cytosolic iron-sulfur protein assembly protein 1 (Candida dubliniensis (strain CD36 / ATCC MYA-646 / CBS 7987 / NCPF 3949 / NRRL Y-17841) (Yeast)).